Here is a 310-residue protein sequence, read N- to C-terminus: Mitochondrial thiamine pyrophosphate carrier 1 (310 aa).

Helical transmembrane passes span 16 to 32 (VSPY…GGVA), 88 to 104 (ILYV…YSAL), 117 to 141 (IVMP…LTTY), 173 to 197 (GISG…LMFW), 218 to 234 (ICGF…TFPL), and 274 to 291 (GYGV…ISLW). Solcar repeat units lie at residues 16 to 107 (VSPY…LSKS), 120 to 205 (PSSV…AREF), and 211 to 299 (HVPF…VISA).

It belongs to the mitochondrial carrier (TC 2.A.29) family.

Its subcellular location is the mitochondrion inner membrane. In terms of biological role, mitochondrial transporter that mediates uptake of thiamine pyrophosphate (ThPP) into mitochondria. This is Mitochondrial thiamine pyrophosphate carrier 1 (TPC1) from Lodderomyces elongisporus (strain ATCC 11503 / CBS 2605 / JCM 1781 / NBRC 1676 / NRRL YB-4239) (Yeast).